The following is a 200-amino-acid chain: MDKRVPHPLFKLATELGPLLIFFAANAKFNLFVATGAFMVAIVAAVIVSYVVMRHVPLMALVTAVIVLVFGGLTLVLHDETFIKIKPTIIYALFAVTLYVGLMLGRSFIAILFDQVFNLTPEGWRFLTIRWARFFLFMAVLNEVIWRTQSTDFWVAFKAFGVIPLTAVFAMTQMPLVKRYQIAEATAEASDSERGDTSPR.

A run of 5 helical transmembrane segments spans residues 32–52 (FVAT…SYVV), 56–76 (VPLM…LTLV), 93–113 (LFAV…AILF), 126–146 (FLTI…EVIW), and 153–173 (FWVA…AMTQ).

Belongs to the YciB family.

The protein resides in the cell inner membrane. In terms of biological role, plays a role in cell envelope biogenesis, maintenance of cell envelope integrity and membrane homeostasis. In Afipia carboxidovorans (strain ATCC 49405 / DSM 1227 / KCTC 32145 / OM5) (Oligotropha carboxidovorans), this protein is Inner membrane-spanning protein YciB.